A 437-amino-acid chain; its full sequence is Cobyrinate a,c-diamide synthase (437 aa).

Residues 241–430 (KIAVAKDEAF…AHVHFFGNLD (190 aa)) enclose the GATase cobBQ-type domain. Cys323 serves as the catalytic Nucleophile.

The protein belongs to the CobB/CbiA family. The cofactor is Mg(2+).

It carries out the reaction cob(II)yrinate + 2 L-glutamine + 2 ATP + 2 H2O = cob(II)yrinate a,c diamide + 2 L-glutamate + 2 ADP + 2 phosphate + 2 H(+). It functions in the pathway cofactor biosynthesis; adenosylcobalamin biosynthesis; cob(II)yrinate a,c-diamide from sirohydrochlorin (anaerobic route): step 10/10. Its function is as follows. Catalyzes the ATP-dependent amidation of the two carboxylate groups at positions a and c of cobyrinate, using either L-glutamine or ammonia as the nitrogen source. The protein is Cobyrinate a,c-diamide synthase of Clostridium acetobutylicum (strain ATCC 824 / DSM 792 / JCM 1419 / IAM 19013 / LMG 5710 / NBRC 13948 / NRRL B-527 / VKM B-1787 / 2291 / W).